Reading from the N-terminus, the 387-residue chain is Eukaryotic translation initiation factor 3 subunit M (387 aa).

Residues 181–340 enclose the PCI domain; that stretch reads LSSKVMIELL…HKVHITSTMH (160 aa).

The protein belongs to the eIF-3 subunit M family. In terms of assembly, component of the eukaryotic translation initiation factor 3 (eIF-3) complex. The eIF-3 complex interacts with pix.

It is found in the cytoplasm. It localises to the golgi apparatus. Its function is as follows. Component of the eukaryotic translation initiation factor 3 (eIF-3) complex, which is involved in protein synthesis of a specialized repertoire of mRNAs and, together with other initiation factors, stimulates binding of mRNA and methionyl-tRNAi to the 40S ribosome. The eIF-3 complex specifically targets and initiates translation of a subset of mRNAs involved in cell proliferation. The sequence is that of Eukaryotic translation initiation factor 3 subunit M from Drosophila erecta (Fruit fly).